A 64-amino-acid chain; its full sequence is MKASELLQKDQAALNKELADLLKAQFGLRMQLATQQLTNTSQLKKVRRDIARVRTVMTQKANQK.

The protein belongs to the universal ribosomal protein uL29 family.

The polypeptide is Large ribosomal subunit protein uL29 (Burkholderia ambifaria (strain MC40-6)).